The primary structure comprises 369 residues: S-(hydroxymethyl)glutathione dehydrogenase (369 aa).

Cys-40, His-62, Cys-92, Cys-95, Cys-98, Cys-106, and Cys-169 together coordinate Zn(2+).

The protein belongs to the zinc-containing alcohol dehydrogenase family. Class-III subfamily. As to quaternary structure, homodimer. Requires Zn(2+) as cofactor.

The protein localises to the cytoplasm. The enzyme catalyses S-(hydroxymethyl)glutathione + NADP(+) = S-formylglutathione + NADPH + H(+). It carries out the reaction S-(hydroxymethyl)glutathione + NAD(+) = S-formylglutathione + NADH + H(+). It catalyses the reaction a primary alcohol + NAD(+) = an aldehyde + NADH + H(+). The catalysed reaction is a secondary alcohol + NAD(+) = a ketone + NADH + H(+). The enzyme catalyses S-nitrosoglutathione + NADH + H(+) = S-(hydroxysulfenamide)glutathione + NAD(+). Has high formaldehyde dehydrogenase activity in the presence of glutathione and catalyzes the oxidation of normal alcohols in a reaction that is not GSH-dependent. In addition, hemithiolacetals other than those formed from GSH, including omega-thiol fatty acids, also are substrates. Also acts as a S-nitroso-glutathione reductase by catalyzing the NADH-dependent reduction of S-nitrosoglutathione. This Photobacterium damsela subsp. piscicida (Pasteurella piscicida) protein is S-(hydroxymethyl)glutathione dehydrogenase (frmA).